Here is a 94-residue protein sequence, read N- to C-terminus: Co-chaperonin GroES (94 aa).

Belongs to the GroES chaperonin family. In terms of assembly, heptamer of 7 subunits arranged in a ring. Interacts with the chaperonin GroEL.

Its subcellular location is the cytoplasm. Functionally, together with the chaperonin GroEL, plays an essential role in assisting protein folding. The GroEL-GroES system forms a nano-cage that allows encapsulation of the non-native substrate proteins and provides a physical environment optimized to promote and accelerate protein folding. GroES binds to the apical surface of the GroEL ring, thereby capping the opening of the GroEL channel. This is Co-chaperonin GroES from Clostridium botulinum (strain Alaska E43 / Type E3).